A 306-amino-acid polypeptide reads, in one-letter code: Acetyl-coenzyme A carboxylase carboxyl transferase subunit beta (306 aa).

The region spanning 27 to 296 (LWHKCPSCDA…PRFVAPVIEP (270 aa)) is the CoA carboxyltransferase N-terminal domain. 4 residues coordinate Zn(2+): Cys31, Cys34, Cys50, and Cys53. Residues 31-53 (CPSCDAVLYRPELEKTLDVCPKC) form a C4-type zinc finger.

It belongs to the AccD/PCCB family. In terms of assembly, acetyl-CoA carboxylase is a heterohexamer composed of biotin carboxyl carrier protein (AccB), biotin carboxylase (AccC) and two subunits each of ACCase subunit alpha (AccA) and ACCase subunit beta (AccD). The cofactor is Zn(2+).

It localises to the cytoplasm. The enzyme catalyses N(6)-carboxybiotinyl-L-lysyl-[protein] + acetyl-CoA = N(6)-biotinyl-L-lysyl-[protein] + malonyl-CoA. It participates in lipid metabolism; malonyl-CoA biosynthesis; malonyl-CoA from acetyl-CoA: step 1/1. Its function is as follows. Component of the acetyl coenzyme A carboxylase (ACC) complex. Biotin carboxylase (BC) catalyzes the carboxylation of biotin on its carrier protein (BCCP) and then the CO(2) group is transferred by the transcarboxylase to acetyl-CoA to form malonyl-CoA. In Pseudomonas syringae pv. tomato (strain ATCC BAA-871 / DC3000), this protein is Acetyl-coenzyme A carboxylase carboxyl transferase subunit beta.